The sequence spans 439 residues: GTPase Der (439 aa).

EngA-type G domains are found at residues 3 to 167 (PTVA…DKVG) and 176 to 351 (IKVA…GNYT). GTP contacts are provided by residues 9–16 (GRPNVGKS), 56–60 (DTGGI), 119–122 (NKID), 182–189 (GKPNTGKS), 229–233 (DTAGL), and 294–297 (NKWD). One can recognise a KH-like domain in the interval 352-436 (RRITTGQIND…PIVFLIREKG (85 aa)).

Belongs to the TRAFAC class TrmE-Era-EngA-EngB-Septin-like GTPase superfamily. EngA (Der) GTPase family. As to quaternary structure, associates with the 50S ribosomal subunit.

Functionally, GTPase that plays an essential role in the late steps of ribosome biogenesis. In Caldicellulosiruptor saccharolyticus (strain ATCC 43494 / DSM 8903 / Tp8T 6331), this protein is GTPase Der.